The sequence spans 273 residues: Tryptophan synthase alpha chain (273 aa).

Active-site proton acceptor residues include glutamate 49 and aspartate 60.

The protein belongs to the TrpA family. As to quaternary structure, tetramer of two alpha and two beta chains.

The catalysed reaction is (1S,2R)-1-C-(indol-3-yl)glycerol 3-phosphate + L-serine = D-glyceraldehyde 3-phosphate + L-tryptophan + H2O. Its pathway is amino-acid biosynthesis; L-tryptophan biosynthesis; L-tryptophan from chorismate: step 5/5. In terms of biological role, the alpha subunit is responsible for the aldol cleavage of indoleglycerol phosphate to indole and glyceraldehyde 3-phosphate. This is Tryptophan synthase alpha chain from Albidiferax ferrireducens (strain ATCC BAA-621 / DSM 15236 / T118) (Rhodoferax ferrireducens).